The chain runs to 493 residues: Glutamyl-tRNA(Gln) amidotransferase subunit A (493 aa).

Catalysis depends on charge relay system residues Lys78 and Ser158. Ser182 acts as the Acyl-ester intermediate in catalysis.

Belongs to the amidase family. GatA subfamily. Heterotrimer of A, B and C subunits.

It carries out the reaction L-glutamyl-tRNA(Gln) + L-glutamine + ATP + H2O = L-glutaminyl-tRNA(Gln) + L-glutamate + ADP + phosphate + H(+). Its function is as follows. Allows the formation of correctly charged Gln-tRNA(Gln) through the transamidation of misacylated Glu-tRNA(Gln) in organisms which lack glutaminyl-tRNA synthetase. The reaction takes place in the presence of glutamine and ATP through an activated gamma-phospho-Glu-tRNA(Gln). The chain is Glutamyl-tRNA(Gln) amidotransferase subunit A from Methylorubrum extorquens (strain PA1) (Methylobacterium extorquens).